Here is a 111-residue protein sequence, read N- to C-terminus: uncharacterized protein (111 aa).

2 helical membrane-spanning segments follow: residues 45-65 and 91-111; these read AFLI…LLVI and LPAG…ILHI.

Its subcellular location is the cell membrane. This is an uncharacterized protein from Methanothermobacter thermautotrophicus (strain ATCC 29096 / DSM 1053 / JCM 10044 / NBRC 100330 / Delta H) (Methanobacterium thermoautotrophicum).